The chain runs to 230 residues: Cytidylate kinase (230 aa).

12–20 (GPSGAGKGT) serves as a coordination point for ATP.

The protein belongs to the cytidylate kinase family. Type 1 subfamily.

It is found in the cytoplasm. It carries out the reaction CMP + ATP = CDP + ADP. The catalysed reaction is dCMP + ATP = dCDP + ADP. This is Cytidylate kinase from Shewanella sp. (strain MR-4).